The chain runs to 438 residues: MKTMNPYIRHLILLICCLGGMLAQPLSAAPQDPVEADRIVAVVGSDVITYFELRTRLTAALKQLQKQGTPLPPQDVLERQMLERLIMERAQLQYGRETGMKIDDTQLDLAIGRIAAGNKMTVPQFRAALEKDGVQYAQFREEIRNEMVTVRLREREVDSKLVISEGEIDNYLANQTATGSEEEYQLAHILLRAPESATPEQLQKLRQRGEQALKRARAGENFAQLTAAFSDAPDALQGGDLGWRPLARLPALYAEAGSRLQSGEVSDLLRSSAGFHIVKLVSKRGGSAPASVQQTHARHILIRSSEVLSEAEATRKLEAVRERIANGVDFAEQARLYSQDGSAAKGGELGWLNPGDTVPEFERAMDALKINEVSQVVQSPFGMHLIQVLERRERDVSAERQRAVARQALRERKLDEAYQDWLRQLRDRTYVENRLDEQ.

Residues 1–28 (MKTMNPYIRHLILLICCLGGMLAQPLSA) form the signal peptide. PpiC domains lie at 181–282 (EEEY…KLVS) and 292–390 (VQQT…QVLE).

It is found in the periplasm. The enzyme catalyses [protein]-peptidylproline (omega=180) = [protein]-peptidylproline (omega=0). Chaperone involved in the correct folding and assembly of outer membrane proteins. Recognizes specific patterns of aromatic residues and the orientation of their side chains, which are found more frequently in integral outer membrane proteins. May act in both early periplasmic and late outer membrane-associated steps of protein maturation. The chain is Chaperone SurA from Dechloromonas aromatica (strain RCB).